We begin with the raw amino-acid sequence, 367 residues long: Cyclin-Y-like protein 1 (367 aa).

3 positions are modified to phosphoserine: S73, S111, and S118. Residues 186–291 enclose the Cyclin N-terminal domain; it reads EYFKHDPEHK…FLELLQFNIN (106 aa). S352 is subject to Phosphoserine.

It belongs to the cyclin family. Cyclin Y subfamily. As to quaternary structure, interacts with CDK16; this interaction mutually increases the stability of CDK16 and CCNYL1 and increases the kinase activity of CDK16. In terms of tissue distribution, highly expressed in the testis. Largely restricted to germ cells in the testis.

Its subcellular location is the cell membrane. Functionally, key regulator of Wnt signaling implicated in various biological processes including male fertility, embryonic neurogenesis and cortex development. Activates the cyclin-dependent kinase CDK16, and promotes sperm maturation. In Mus musculus (Mouse), this protein is Cyclin-Y-like protein 1.